Reading from the N-terminus, the 268-residue chain is CCAAT/enhancer-binding protein delta (268 aa).

3 disordered regions span residues methionine 1 to proline 50, leucine 98 to glycine 132, and alanine 152 to leucine 223. Residue serine 2 is modified to N-acetylserine. Lysine 120 is covalently cross-linked (Glycyl lysine isopeptide (Lys-Gly) (interchain with G-Cter in SUMO)). A compositionally biased stretch (pro residues) spans proline 155–alanine 173. The span at valine 177–asparagine 201 shows a compositional bias: basic and acidic residues. The region spanning serine 191–leucine 254 is the bZIP domain. Residues arginine 195–lysine 222 form a basic motif region. The tract at residues leucine 226–leucine 254 is leucine-zipper.

The protein belongs to the bZIP family. C/EBP subfamily. Binds DNA as a homodimer and as a heterodimer. Can form stable heterodimers with CEBPA, CEBPB and CEBPE. Directly interacts with SPI1/PU.1; this interaction does not affect DNA-binding properties of each partner. Interacts with PRDM16. Ubiquitously expressed.

The protein localises to the nucleus. In terms of biological role, transcription activator that recognizes two different DNA motifs: the CCAAT homology common to many promoters and the enhanced core homology common to many enhancers. Important transcription factor regulating the expression of genes involved in immune and inflammatory responses. Transcriptional activator that enhances IL6 transcription alone and as heterodimer with CEBPB. The protein is CCAAT/enhancer-binding protein delta (Cebpd) of Rattus norvegicus (Rat).